A 252-amino-acid polypeptide reads, in one-letter code: 3-deoxy-manno-octulosonate cytidylyltransferase (252 aa).

Belongs to the KdsB family.

It is found in the cytoplasm. It catalyses the reaction 3-deoxy-alpha-D-manno-oct-2-ulosonate + CTP = CMP-3-deoxy-beta-D-manno-octulosonate + diphosphate. It participates in nucleotide-sugar biosynthesis; CMP-3-deoxy-D-manno-octulosonate biosynthesis; CMP-3-deoxy-D-manno-octulosonate from 3-deoxy-D-manno-octulosonate and CTP: step 1/1. The protein operates within bacterial outer membrane biogenesis; lipopolysaccharide biosynthesis. Functionally, activates KDO (a required 8-carbon sugar) for incorporation into bacterial lipopolysaccharide in Gram-negative bacteria. This chain is 3-deoxy-manno-octulosonate cytidylyltransferase, found in Xylella fastidiosa (strain Temecula1 / ATCC 700964).